Reading from the N-terminus, the 80-residue chain is Exodeoxyribonuclease 7 small subunit (80 aa).

It belongs to the XseB family. As to quaternary structure, heterooligomer composed of large and small subunits.

Its subcellular location is the cytoplasm. It carries out the reaction Exonucleolytic cleavage in either 5'- to 3'- or 3'- to 5'-direction to yield nucleoside 5'-phosphates.. In terms of biological role, bidirectionally degrades single-stranded DNA into large acid-insoluble oligonucleotides, which are then degraded further into small acid-soluble oligonucleotides. The protein is Exodeoxyribonuclease 7 small subunit of Halalkalibacterium halodurans (strain ATCC BAA-125 / DSM 18197 / FERM 7344 / JCM 9153 / C-125) (Bacillus halodurans).